Reading from the N-terminus, the 267-residue chain is Translation initiation factor 2 subunit alpha (267 aa).

The S1 motif domain occupies 12–83 (GELVVATVKE…RKKQVDVSLK (72 aa)).

Belongs to the eIF-2-alpha family. As to quaternary structure, heterotrimer composed of an alpha, a beta and a gamma chain.

EIF-2 functions in the early steps of protein synthesis by forming a ternary complex with GTP and initiator tRNA. This chain is Translation initiation factor 2 subunit alpha, found in Hyperthermus butylicus (strain DSM 5456 / JCM 9403 / PLM1-5).